The chain runs to 175 residues: Endothelin-2 (175 aa).

Residues 1–21 (MVSAWCSIALALLLALHEGKG) form the signal peptide. Positions 22 to 43 (QAAATLEQPASAPKGRGPHLRF) are excised as a propeptide. 2 disulfide bridges follow: cysteine 46/cysteine 60 and cysteine 48/cysteine 56. Positions 67–175 (VNTAGQTAPY…IPAYSRWRKR (109 aa)) are excised as a propeptide. Residues 93–108 (CECSTAGDSACATFCH) form an endothelin-like region.

The protein belongs to the endothelin/sarafotoxin family.

The protein localises to the secreted. In terms of biological role, vasoconstrictor. The sequence is that of Endothelin-2 (Edn2) from Mus musculus (Mouse).